Consider the following 1840-residue polypeptide: Collagen alpha-1(V) chain (1840 aa).

The signal sequence occupies residues 1 to 36 (MDVHTRWKDRLPVGPAAVPPLLLLLLLLWAPPQSRA). Residues 72 to 244 (DVAYRVSKDA…DYCEHYSPDC (173 aa)) form the Laminin G-like domain. The nonhelical region stretch occupies residues 231 to 445 (RAAYDYCEHY…MPANQDTIYE (215 aa)). Sulfotyrosine is present on residues Tyr-234, Tyr-236, Tyr-240, Tyr-262, Tyr-263, and Tyr-271. 3 disordered regions span residues 242–523 (PDCD…TMLM), 528–547 (FGGG…QESQ), and 561–1576 (GPAG…EVIQ). Acidic residues predominate over residues 258–268 (NPDEYYPEGDG). 2 stretches are compositionally biased toward low complexity: residues 335-352 (DYDY…PYED) and 376-386 (TSTIITSNTSN). Residues 446–560 (GIGGPRGEKG…ILQQARLALR (115 aa)) are interrupted collagenous region. Positions 472–487 (PPGPEGPAGLPGPPGT) are enriched in pro residues. Low complexity predominate over residues 508-523 (LPGADGLPGPPGTMLM). Positions 561–572 (GPAGPMGLTGRP) are enriched in low complexity. The triple-helical region stretch occupies residues 561 to 1572 (GPAGPMGLTG…GLPGPPGPPG (1012 aa)). Residues Pro-572, Pro-578, and Pro-623 each carry the 4-hydroxyproline modification. 5-hydroxylysine is present on Lys-629. The residue at position 641 (Pro-641) is a 4-hydroxyproline. At Lys-644 the chain carries 5-hydroxylysine. Pro-650, Pro-656, Pro-659, Pro-677, and Pro-680 each carry 4-hydroxyproline. Positions 673 to 688 (PRGLPGEPGPRGLLGP) are enriched in low complexity. 3-hydroxyproline occurs at positions 682 and 688. A compositionally biased stretch (pro residues) spans 689–698 (KGPPGPPGPP). A 4-hydroxyproline mark is found at Pro-692, Pro-698, and Pro-707. A 5-hydroxylysine modification is found at Lys-710. 4 positions are modified to 4-hydroxyproline: Pro-719, Pro-722, Pro-728, and Pro-734. Residues 724–743 (QQGNPGAQGLPGPQGAIGPP) show a composition bias toward low complexity. Lys-746 is subject to 5-hydroxylysine. Low complexity predominate over residues 749-758 (LGKPGLPGMP). A 4-hydroxyproline mark is found at Pro-752, Pro-758, Pro-764, Pro-767, and Pro-773. Lys-776 is modified (5-hydroxylysine). Residues Pro-782 and Pro-791 each carry the 4-hydroxyproline modification. 5-hydroxylysine is present on residues Lys-797, Lys-806, Lys-809, and Lys-812. Position 818 is a 4-hydroxyproline (Pro-818). Lys-821 carries the post-translational modification 5-hydroxylysine. Pro-836 carries the 4-hydroxyproline modification. Residues 839-848 (RGEDGPEGPK) show a composition bias toward basic and acidic residues. Residues Lys-848 and Lys-866 each carry the 5-hydroxylysine modification. Pro-872, Pro-875, and Pro-878 each carry 4-hydroxyproline. Lys-884 carries the 5-hydroxylysine modification. Residues Pro-890 and Pro-893 each carry the 4-hydroxyproline modification. Position 899 is a 5-hydroxylysine (Lys-899). Pro-905 and Pro-908 each carry 4-hydroxyproline. The span at 910–919 (PRGQRGPTGP) shows a compositional bias: low complexity. 4-hydroxyproline is present on residues Pro-932 and Pro-947. Composition is skewed to low complexity over residues 973–992 (KDGL…QGKT) and 1001–1013 (VGPQ…TGPM). 4-hydroxyproline is present on residues Pro-1019, Pro-1022, Pro-1025, and Pro-1031. Low complexity predominate over residues 1090–1106 (SPGERGPAGAAGPIGIP). Residues 1108 to 1117 (RPGPQGPPGP) show a composition bias toward pro residues. Residues Pro-1223 and Pro-1226 each carry the 4-hydroxyproline modification. Positions 1261 to 1270 (PSGAPGADGP) are enriched in low complexity. The span at 1296–1305 (GLPGEGGPLG) shows a compositional bias: gly residues. Composition is skewed to pro residues over residues 1382-1400 (TGEP…PGPA) and 1456-1471 (SPGP…PPGL). Residues Pro-1469 and Pro-1472 each carry the 4-hydroxyproline modification. Low complexity predominate over residues 1487-1496 (PGLIGLIGPP). Residues 1528–1543 (PLGPPGPPGLPGPPGP) show a composition bias toward pro residues. Positions 1544–1556 (KGAKGSSGPTGPK) are enriched in low complexity. Residues 1573 to 1607 (EVIQPLPIQASRTRRNIDASQLLDDGAGESYLDYA) are nonhelical region. Sulfotyrosine occurs at positions 1603 and 1606. Residues 1611 to 1839 (EEIFGSLNSL…GFEVGPACFL (229 aa)) enclose the Fibrillar collagen NC1 domain.

The protein belongs to the fibrillar collagen family. As to quaternary structure, trimers of two alpha 1(V) and one alpha 2(V) chains in most tissues and trimers of one alpha 1(V), one alpha 2(V), and one alpha 3(V) chains in placenta. Interacts with CSPG4. In terms of processing, hydroxylation on proline residues within the sequence motif, GXPG, is most likely to be 4-hydroxy as this fits the requirement for 4-hydroxylation in vertebrates. Post-translationally, sulfated on 40% of tyrosines. Ubiquitously expressed.

The protein resides in the secreted. The protein localises to the extracellular space. It localises to the extracellular matrix. Its function is as follows. Type V collagen is a member of group I collagen (fibrillar forming collagen). It is a minor connective tissue component of nearly ubiquitous distribution. Type V collagen binds to DNA, heparan sulfate, thrombospondin, heparin, and insulin. The chain is Collagen alpha-1(V) chain (COL5A1) from Cricetulus longicaudatus (Long-tailed dwarf hamster).